We begin with the raw amino-acid sequence, 1420 residues long: ABC transporter G family member 32 (1420 aa).

Residues 135 to 408 (LRNIHVIGGK…FSSLGFTCPD (274 aa)) form the ABC transporter 1 domain. An ATP-binding site is contributed by 168–175 (GPPSSGKT). An ABC transmembrane type-2 1 domain is found at 486–699 (ELLKINFAWQ…AQNAASVNEF (214 aa)). The next 7 helical transmembrane spans lie at 504 to 524 (FIYVFKFVQLLLVALITMTVF), 544 to 564 (LYFSMVIILFNGFTEVPMLVA), 585 to 605 (LPSWLLSIPTSIIESATWVAV), 623 to 643 (FLLYFSLHQMSLGLFRVMGSL), 648 to 668 (IVANTFGSFAMLVVMTLGGFI), 674 to 694 (IPSWWIWGYWISPLMYAQNAA), and 735 to 755 (IGVAALLGYTVLFNILFTLFL). The ABC transporter 2 domain occupies 818 to 1070 (LSFSNINYYV…ELIKYFESIE (253 aa)). 863-870 (GVSGAGKT) is an ATP binding site. The region spanning 1143–1357 (SQFVACLWKQ…TLYGLLVSQY (215 aa)) is the ABC transmembrane type-2 2 domain. 7 consecutive transmembrane segments (helical) span residues 1162–1182 (YTAVRFFYTVVISLMLGTICW), 1202–1222 (YAAVLFIGITNATAAQPVVSI), 1235–1255 (MYSALPFAFAQVFIEFPYVLA), 1277–1297 (FLWYLFFMYFSIMYFTFYGMM), 1307–1327 (VASIIAAPFYMLWNLFSGFMI), 1334–1354 (LWWRWYYWANPVAWTLYGLLV), and 1392–1412 (VSAIMVVAFCVFFSLVFAFAI).

It belongs to the ABC transporter superfamily. ABCG family. PDR (TC 3.A.1.205) subfamily. In terms of tissue distribution, ubiquitous in aerial organs. Higher expression levels in young, expanding tissues than in older tissues. Detected in the epidermal layer.

It localises to the cell membrane. May be a general defense protein. Required for the formation of the cuticle layer of the cell wall. The polypeptide is ABC transporter G family member 32 (Arabidopsis thaliana (Mouse-ear cress)).